A 137-amino-acid chain; its full sequence is Protein ApaG (137 aa).

The ApaG domain occupies 2 to 126 (PKYQFQVQVQ…FVLEAFSPGQ (125 aa)).

In Acidovorax sp. (strain JS42), this protein is Protein ApaG.